A 525-amino-acid polypeptide reads, in one-letter code: PE-PGRS family protein PE_PGRS47 (525 aa).

Residues 1–93 (MSFVIAAPEF…AYSYASAEAA (93 aa)) form the PE domain. Residues 506 to 525 (VGGAGGLLEGQNGENGLLPS) form a disordered region. Positions 514–525 (EGQNGENGLLPS) are enriched in low complexity.

The protein belongs to the mycobacterial PE family. PGRS subfamily.

It is found in the secreted. The protein localises to the cell surface. It localises to the host cytoplasm. The protein resides in the host cytosol. In terms of biological role, contributes to evasion of both innate and adaptive immunity. Inhibits autophagy in infected host phagocytes and inhibits major histocompatibility complex (MHC) class II antigen presentation by mycobacteria-infected dendritic cells. Has an important role in the growth and survival of M.tuberculosis, particularly during intracellular growth and in the later chronic phase of infection. The chain is PE-PGRS family protein PE_PGRS47 from Mycobacterium tuberculosis (strain ATCC 25618 / H37Rv).